The primary structure comprises 421 residues: Gamma-glutamyl phosphate reductase (421 aa).

The protein belongs to the gamma-glutamyl phosphate reductase family.

It localises to the cytoplasm. It carries out the reaction L-glutamate 5-semialdehyde + phosphate + NADP(+) = L-glutamyl 5-phosphate + NADPH + H(+). It participates in amino-acid biosynthesis; L-proline biosynthesis; L-glutamate 5-semialdehyde from L-glutamate: step 2/2. In terms of biological role, catalyzes the NADPH-dependent reduction of L-glutamate 5-phosphate into L-glutamate 5-semialdehyde and phosphate. The product spontaneously undergoes cyclization to form 1-pyrroline-5-carboxylate. In Herminiimonas arsenicoxydans, this protein is Gamma-glutamyl phosphate reductase.